Consider the following 328-residue polypeptide: Lipoyl synthase (328 aa).

The [4Fe-4S] cluster site is built by Cys75, Cys80, Cys86, Cys101, Cys105, Cys108, and Ser315. The Radical SAM core domain maps to 87-304; it reads FNHGTATFMI…EREAKKMGYE (218 aa).

This sequence belongs to the radical SAM superfamily. Lipoyl synthase family. The cofactor is [4Fe-4S] cluster.

It is found in the cytoplasm. The catalysed reaction is [[Fe-S] cluster scaffold protein carrying a second [4Fe-4S](2+) cluster] + N(6)-octanoyl-L-lysyl-[protein] + 2 oxidized [2Fe-2S]-[ferredoxin] + 2 S-adenosyl-L-methionine + 4 H(+) = [[Fe-S] cluster scaffold protein] + N(6)-[(R)-dihydrolipoyl]-L-lysyl-[protein] + 4 Fe(3+) + 2 hydrogen sulfide + 2 5'-deoxyadenosine + 2 L-methionine + 2 reduced [2Fe-2S]-[ferredoxin]. Its pathway is protein modification; protein lipoylation via endogenous pathway; protein N(6)-(lipoyl)lysine from octanoyl-[acyl-carrier-protein]: step 2/2. Catalyzes the radical-mediated insertion of two sulfur atoms into the C-6 and C-8 positions of the octanoyl moiety bound to the lipoyl domains of lipoate-dependent enzymes, thereby converting the octanoylated domains into lipoylated derivatives. In Colwellia psychrerythraea (strain 34H / ATCC BAA-681) (Vibrio psychroerythus), this protein is Lipoyl synthase.